A 176-amino-acid chain; its full sequence is Co-chaperone protein HscB homolog (176 aa).

The J domain occupies 7-79 (THFSLFGLPE…LKRATYLLHL (73 aa)).

Belongs to the HscB family. Interacts with HscA and stimulates its ATPase activity.

Its function is as follows. Co-chaperone involved in the maturation of iron-sulfur cluster-containing proteins. Seems to help targeting proteins to be folded toward HscA. The sequence is that of Co-chaperone protein HscB homolog from Ralstonia nicotianae (strain ATCC BAA-1114 / GMI1000) (Ralstonia solanacearum).